Reading from the N-terminus, the 41-residue chain is GILDTIKSIASKVWNSKTVQDLKRKGINWVANKLGVSPQAA.

This sequence belongs to the non-disulfide-bridged peptide (NDBP) superfamily. Long chain multifunctional peptide (group 2) family. In terms of tissue distribution, expressed by the venom gland.

Its subcellular location is the secreted. In terms of biological role, antimicrobial activity against S.typhimurium, K.pneumoniae, E.cloacae, P.aeruginosa, E.coli and S.marcescens. Also shows hemolytic activity when tested in human erythrocytes. The polypeptide is Hadrurin (Hoffmannihadrurus aztecus (Mexican scorpion)).